Consider the following 88-residue polypeptide: Small ribosomal subunit protein bS20 (88 aa).

This sequence belongs to the bacterial ribosomal protein bS20 family.

Its function is as follows. Binds directly to 16S ribosomal RNA. This Methylocella silvestris (strain DSM 15510 / CIP 108128 / LMG 27833 / NCIMB 13906 / BL2) protein is Small ribosomal subunit protein bS20.